Here is a 180-residue protein sequence, read N- to C-terminus: Adenine phosphoribosyltransferase (180 aa).

It belongs to the purine/pyrimidine phosphoribosyltransferase family. In terms of assembly, homodimer.

It is found in the cytoplasm. It carries out the reaction AMP + diphosphate = 5-phospho-alpha-D-ribose 1-diphosphate + adenine. It functions in the pathway purine metabolism; AMP biosynthesis via salvage pathway; AMP from adenine: step 1/1. Catalyzes a salvage reaction resulting in the formation of AMP, that is energically less costly than de novo synthesis. The protein is Adenine phosphoribosyltransferase of Rhizobium meliloti (strain 1021) (Ensifer meliloti).